Here is a 500-residue protein sequence, read N- to C-terminus: Kynurenine 3-monooxygenase (500 aa).

The protein belongs to the aromatic-ring hydroxylase family. KMO subfamily. FAD is required as a cofactor.

The protein resides in the mitochondrion outer membrane. It carries out the reaction L-kynurenine + NADPH + O2 + H(+) = 3-hydroxy-L-kynurenine + NADP(+) + H2O. It participates in cofactor biosynthesis; NAD(+) biosynthesis; quinolinate from L-kynurenine: step 1/3. Catalyzes the hydroxylation of L-kynurenine (L-Kyn) to form 3-hydroxy-L-kynurenine (L-3OHKyn). Required for synthesis of quinolinic acid. The chain is Kynurenine 3-monooxygenase (bna4) from Aspergillus terreus (strain NIH 2624 / FGSC A1156).